The sequence spans 352 residues: Protein RecA (352 aa).

ATP is bound at residue 67-74 (GPESSGKT). The segment at 333–352 (DSTPDFAVDGNDAEETEQDF) is disordered. Acidic residues predominate over residues 343 to 352 (NDAEETEQDF).

The protein belongs to the RecA family.

The protein resides in the cytoplasm. Can catalyze the hydrolysis of ATP in the presence of single-stranded DNA, the ATP-dependent uptake of single-stranded DNA by duplex DNA, and the ATP-dependent hybridization of homologous single-stranded DNAs. It interacts with LexA causing its activation and leading to its autocatalytic cleavage. The polypeptide is Protein RecA (Klebsiella pneumoniae (strain 342)).